The following is a 216-amino-acid chain: Ras-related protein Rab-5C (216 aa).

Positions 30, 31, 33, 34, 35, 36, 47, 48, 53, and 79 each coordinate GTP. Mg(2+) is bound at residue Ser35. Short sequence motifs (switch) lie at residues 45-57 and 78-94; these read QFHE…IGAA and AGQE…YRGA. Mg(2+) is bound at residue Thr53. Phosphoserine; by LRRK2 is present on Ser85. Residues Asn134, Lys135, Asp137, Ala165, and Lys166 each coordinate GTP. The segment at 185–216 is disordered; the sequence is NEPQNATGAPGRNRGVDLQENNPASRSQCCSN. A compositionally biased stretch (polar residues) spans 203 to 216; sequence QENNPASRSQCCSN. 2 S-geranylgeranyl cysteine lipidation sites follow: Cys213 and Cys214.

This sequence belongs to the small GTPase superfamily. Rab family. In terms of assembly, interacts with EEA1. Interacts with INCA1. Interacts with GDI1, GDI2, CHML and CHM; phosphorylation at Ser-85 disrupts this interaction. Requires Mg(2+) as cofactor. Post-translationally, phosphorylation of Ser-85 in the switch II region by LRRK2 prevents the association of RAB regulatory proteins, including CHM, CHML and RAB GDP dissociation inhibitors GDI1 and GDI2. (Microbial infection) Glycosylated on arginine residues by S.typhimurium protein Ssek3.

It is found in the cell membrane. The protein resides in the early endosome membrane. It localises to the melanosome. The catalysed reaction is GTP + H2O = GDP + phosphate + H(+). Regulated by guanine nucleotide exchange factors (GEFs) which promote the exchange of bound GDP for free GTP. Regulated by GTPase activating proteins (GAPs) which increase the GTP hydrolysis activity. Inhibited by GDP dissociation inhibitors (GDIs). In terms of biological role, the small GTPases Rab are key regulators of intracellular membrane trafficking, from the formation of transport vesicles to their fusion with membranes. Rabs cycle between an inactive GDP-bound form and an active GTP-bound form that is able to recruit to membranes different sets of downstream effectors directly responsible for vesicle formation, movement, tethering and fusion. The polypeptide is Ras-related protein Rab-5C (Homo sapiens (Human)).